A 181-amino-acid polypeptide reads, in one-letter code: Protein Abitram (181 aa).

The protein belongs to the ABITRAM family. Interacts with F-actin. Interacts with G-actin.

The protein resides in the nucleus speckle. The protein localises to the cell projection. It is found in the lamellipodium. Its subcellular location is the nucleus. It localises to the growth cone. The protein resides in the dendrite. Functionally, actin-binding protein that regulates actin polymerization, filopodia dynamics and increases the branching of proximal dendrites of developing neurons. This is Protein Abitram from Homo sapiens (Human).